The primary structure comprises 122 residues: Large ribosomal subunit protein uL14 (122 aa).

This sequence belongs to the universal ribosomal protein uL14 family. Part of the 50S ribosomal subunit. Forms a cluster with proteins L3 and L19. In the 70S ribosome, L14 and L19 interact and together make contacts with the 16S rRNA in bridges B5 and B8.

Its function is as follows. Binds to 23S rRNA. Forms part of two intersubunit bridges in the 70S ribosome. The polypeptide is Large ribosomal subunit protein uL14 (Pseudomonas aeruginosa (strain LESB58)).